A 100-amino-acid chain; its full sequence is NADH-quinone oxidoreductase subunit K 2 (100 aa).

The next 3 helical transmembrane spans lie at 2 to 22, 29 to 49, and 61 to 81; these read LAIE…TIGV, IVIF…FIAF, and FVFF…ALMI.

It belongs to the complex I subunit 4L family. NDH-1 is composed of 14 different subunits. Subunits NuoA, H, J, K, L, M, N constitute the membrane sector of the complex.

Its subcellular location is the cell inner membrane. It carries out the reaction a quinone + NADH + 5 H(+)(in) = a quinol + NAD(+) + 4 H(+)(out). NDH-1 shuttles electrons from NADH, via FMN and iron-sulfur (Fe-S) centers, to quinones in the respiratory chain. The immediate electron acceptor for the enzyme in this species is believed to be ubiquinone. Couples the redox reaction to proton translocation (for every two electrons transferred, four hydrogen ions are translocated across the cytoplasmic membrane), and thus conserves the redox energy in a proton gradient. In Citrifermentans bemidjiense (strain ATCC BAA-1014 / DSM 16622 / JCM 12645 / Bem) (Geobacter bemidjiensis), this protein is NADH-quinone oxidoreductase subunit K 2.